A 137-amino-acid chain; its full sequence is Large ribosomal subunit protein uL16 (137 aa).

It belongs to the universal ribosomal protein uL16 family. As to quaternary structure, part of the 50S ribosomal subunit.

Functionally, binds 23S rRNA and is also seen to make contacts with the A and possibly P site tRNAs. The polypeptide is Large ribosomal subunit protein uL16 (Sinorhizobium medicae (strain WSM419) (Ensifer medicae)).